A 654-amino-acid polypeptide reads, in one-letter code: Myrosinase-binding protein 2 (654 aa).

Jacalin-type lectin domains are found at residues 2–151 (SEKV…HFFA), 156–291 (LKHF…HFAP), 346–489 (PNKV…YFAP), and 502–645 (AKKL…HAVP). Residues 314–346 (VPAPSPAPAPSPAPAPAPAPAPAPTPAPAPAPP) are compositionally biased toward pro residues. The disordered stretch occupies residues 314 to 355 (VPAPSPAPAPSPAPAPAPAPAPAPTPAPAPAPPNKVEALGGN).

Belongs to the jacalin lectin family. In terms of tissue distribution, expressed in flowers. Detected mainly in ovules and styles of immature flowers, but also in pistils, styles, stamens, petals and embryos. Not detected in leaves.

The protein is Myrosinase-binding protein 2 (MBP2) of Arabidopsis thaliana (Mouse-ear cress).